A 185-amino-acid chain; its full sequence is CASP-like protein 2C3 (185 aa).

The Cytoplasmic segment spans residues 1–13 (MAAAARVSEVKAE). The helical transmembrane segment at 14–34 (GLLRGACAALAAAAALLVGLS) threads the bilayer. At 35–53 (TQTETVLLVRKKATVKDVQ) the chain is on the extracellular side. The helical transmembrane segment at 54-74 (ALWVLAMAAAAAAGYHLLQLL) threads the bilayer. At 75-104 (KCLYLGRVGGARPCRRSSRALAWTCLLLDK) the chain is on the cytoplasmic side. Residues 105 to 125 (ACAYTTFATTVAAAQACVVAL) form a helical membrane-spanning segment. Residues 126-146 (DGAHAVQWTKLCNIYTRFCEQ) lie on the Extracellular side of the membrane. A helical transmembrane segment spans residues 147 to 167 (VAGSLVLGMLAAVGTAVLSAA). At 168–185 (SARNVFRHYSSLETYAAH) the chain is on the cytoplasmic side.

Belongs to the Casparian strip membrane proteins (CASP) family. As to quaternary structure, homodimer and heterodimers.

It is found in the cell membrane. In Zea mays (Maize), this protein is CASP-like protein 2C3.